The primary structure comprises 1230 residues: Basic-leucine zipper transcription factor A (1230 aa).

Disordered stretches follow at residues leucine 65–asparagine 108, leucine 180–glutamine 233, glutamine 270–glutamine 310, and histidine 422–aspartate 578. Composition is skewed to low complexity over residues asparagine 69 to asparagine 108, asparagine 192 to glutamine 233, glutamine 270 to proline 287, proline 295 to glutamine 310, and histidine 422 to histidine 447. 2 stretches are compositionally biased toward polar residues: residues lysine 448–proline 458 and threonine 466–glycine 475. The span at serine 476–serine 503 shows a compositional bias: low complexity. The segment covering proline 523–histidine 537 has biased composition (basic residues). A compositionally biased stretch (acidic residues) spans phenylalanine 541–glutamate 554. Residues aspartate 555–aspartate 618 enclose the bZIP domain. A basic motif region spans residues lysine 556 to lysine 586. Positions arginine 562–asparagine 571 are enriched in polar residues. The leucine-zipper stretch occupies residues leucine 590–leucine 604. Residues leucine 728 to isoleucine 753 adopt a coiled-coil conformation. 2 disordered regions span residues threonine 772–lysine 869 and asparagine 1025–isoleucine 1230. Composition is skewed to low complexity over residues asparagine 774–proline 803 and asparagine 810–asparagine 831. Residues serine 832–glycine 845 are compositionally biased toward basic residues. Over residues asparagine 1025–asparagine 1042 the composition is skewed to polar residues. Low complexity-rich tracts occupy residues asparagine 1052–asparagine 1146 and glutamine 1153–serine 1193.

The protein belongs to the bZIP family. Binds DNA as a dimer. Heterodimerizes with dimB; in vitro. Also able to form homodimer; in vitro.

The protein localises to the nucleus. Functionally, transcriptional regulator involved in DIF-1 signaling. DIF-1 (Differentiation Inducing Factor-1) is a signal molecule involved in the differentiation of pstO (prestalk-O) cells. Functions both as an activator of prestalk gene expression and a repressor of prespore gene expression. This chain is Basic-leucine zipper transcription factor A (dimA), found in Dictyostelium discoideum (Social amoeba).